Consider the following 152-residue polypeptide: Ribosome maturation factor RimP (152 aa).

This sequence belongs to the RimP family.

It localises to the cytoplasm. Functionally, required for maturation of 30S ribosomal subunits. The polypeptide is Ribosome maturation factor RimP (Yersinia enterocolitica serotype O:8 / biotype 1B (strain NCTC 13174 / 8081)).